Consider the following 332-residue polypeptide: Ribosomal RNA small subunit methyltransferase C (332 aa).

Belongs to the methyltransferase superfamily. RsmC family. In terms of assembly, monomer.

It localises to the cytoplasm. The enzyme catalyses guanosine(1207) in 16S rRNA + S-adenosyl-L-methionine = N(2)-methylguanosine(1207) in 16S rRNA + S-adenosyl-L-homocysteine + H(+). In terms of biological role, specifically methylates the guanine in position 1207 of 16S rRNA in the 30S particle. The protein is Ribosomal RNA small subunit methyltransferase C of Pseudomonas putida (strain ATCC 47054 / DSM 6125 / CFBP 8728 / NCIMB 11950 / KT2440).